Consider the following 459-residue polypeptide: Zeatin O-glucosyltransferase (459 aa).

The Proton acceptor role is filled by H26. H26 provides a ligand contact to an anthocyanidin. D125 (charge relay) is an active-site residue. The UDP-alpha-D-glucose site is built by S148, A335, Q337, H352, W355, N356, S357, E360, D376, and Q377.

Belongs to the UDP-glycosyltransferase family.

It carries out the reaction trans-zeatin + UDP-alpha-D-glucose = O-beta-D-glucosyl-trans-zeatin + UDP + H(+). Its function is as follows. May regulate active versus storage forms of cytokinins, and could have an impact on seed growth. Can also use UDP-xylose to catalyze the formation of O-xylosylzeatin but at much lower affinity. This chain is Zeatin O-glucosyltransferase, found in Phaseolus lunatus (Lima bean).